The primary structure comprises 203 residues: Methyltransferase-like 26 (203 aa).

It belongs to the UPF0585 family.

This chain is Methyltransferase-like 26, found in Xenopus tropicalis (Western clawed frog).